The sequence spans 115 residues: Nucleoid-associated protein LA_4332 (115 aa).

Belongs to the YbaB/EbfC family. In terms of assembly, homodimer.

The protein resides in the cytoplasm. It localises to the nucleoid. Its function is as follows. Binds to DNA and alters its conformation. May be involved in regulation of gene expression, nucleoid organization and DNA protection. The sequence is that of Nucleoid-associated protein LA_4332 from Leptospira interrogans serogroup Icterohaemorrhagiae serovar Lai (strain 56601).